The sequence spans 147 residues: Hemoglobin subunit gamma (147 aa).

Residues 3 to 147 (HFTAEEKAVI…VAIALAHKYH (145 aa)) form the Globin domain. Residues His64 and His93 each coordinate heme b.

This sequence belongs to the globin family. Heterotetramer of two alpha chains and two gamma chains in fetal hemoglobin (Hb F). In terms of tissue distribution, red blood cells.

Its function is as follows. Gamma chains make up the fetal hemoglobin F, in combination with alpha chains. The protein is Hemoglobin subunit gamma (HBG) of Eulemur fulvus fulvus (Brown lemur).